We begin with the raw amino-acid sequence, 182 residues long: RNA chaperone ProQ (182 aa).

The interval Glu125–Asp160 is disordered.

This sequence belongs to the ProQ family.

The protein resides in the cytoplasm. Functionally, RNA chaperone with significant RNA binding, RNA strand exchange and RNA duplexing activities. The chain is RNA chaperone ProQ from Haemophilus ducreyi (strain 35000HP / ATCC 700724).